The following is a 697-amino-acid chain: Zinc finger protein 12 (697 aa).

K3 participates in a covalent cross-link: Glycyl lysine isopeptide (Lys-Gly) (interchain with G-Cter in SUMO2). The region spanning 8–79 (VSFKDVAVDF…EGEFLLQSYP (72 aa)) is the KRAB domain. Residues K98, K179, K182, K209, K215, K224, K239, and K267 each participate in a glycyl lysine isopeptide (Lys-Gly) (interchain with G-Cter in SUMO2) cross-link. C2H2-type zinc fingers lie at residues 269-291 (YECS…QRTH) and 297-319 (YECN…QRTH). Glycyl lysine isopeptide (Lys-Gly) (interchain with G-Cter in SUMO2) cross-links involve residues K309, K323, K337, and K365. 8 consecutive C2H2-type zinc fingers follow at residues 325–347 (YECN…QRTH), 353–375 (YECS…QRTH), 381–403 (YVCH…QKIH), 409–431 (YKCS…LRTH), 437–459 (YECN…YRTH), 465–487 (YECN…QRVH), 493–515 (YECN…HRTH), and 521–543 (YECS…RRIH). Glycyl lysine isopeptide (Lys-Gly) (interchain with G-Cter in SUMO2) cross-links involve residues K544 and K547. 5 C2H2-type zinc fingers span residues 549-571 (YECY…HRIH), 577-599 (YECS…QRTH), 605-627 (YECY…HRIH), 633-655 (FECN…YRTH), and 661-683 (YECT…QRIH).

It belongs to the krueppel C2H2-type zinc-finger protein family. In terms of tissue distribution, widely expressed in various adult tissues and embryonic developmental stages (isoform 3).

The protein resides in the nucleus. Functionally, transcriptional repressor which suppresses activation protein 1 (AP-1)- and serum response element (SRE)-mediated transcriptional activity. This Homo sapiens (Human) protein is Zinc finger protein 12 (ZNF12).